Consider the following 297-residue polypeptide: Dipicolinate synthase subunit A (297 aa).

NADP(+) is bound by residues 164–165 (RT), R185, T203, 242–244 (LAS), and 264–267 (APGL).

As to quaternary structure, dipicolinate synthase likely consists of DpaA and DpaB, since both proteins are required for DPA synthesis.

The catalysed reaction is (S)-2,3-dihydrodipicolinate + NADP(+) = dipicolinate + NADPH + H(+). Its function is as follows. Together with DpaB, catalyzes the conversion of dihydrodipicolinate to dipicolinate (DPA), which constitutes up to 10% of the dry weight of the spore. The chain is Dipicolinate synthase subunit A (dpaA) from Bacillus subtilis (strain 168).